Here is a 229-residue protein sequence, read N- to C-terminus: DNA mismatch repair protein MutH (229 aa).

The protein belongs to the MutH family.

The protein resides in the cytoplasm. Its function is as follows. Sequence-specific endonuclease that cleaves unmethylated GATC sequences. It is involved in DNA mismatch repair. This is DNA mismatch repair protein MutH from Escherichia coli O45:K1 (strain S88 / ExPEC).